Here is a 292-residue protein sequence, read N- to C-terminus: Small ribosomal subunit biogenesis GTPase RsgA (292 aa).

The CP-type G domain maps to 64 to 221 (RSELFRPAVA…LVDTPGFSSL (158 aa)). GTP contacts are provided by residues 113–116 (NKMD) and 164–172 (GPSGVGKST). Zn(2+) contacts are provided by Cys-245, Cys-250, His-252, and Cys-258.

It belongs to the TRAFAC class YlqF/YawG GTPase family. RsgA subfamily. Monomer. Associates with 30S ribosomal subunit, binds 16S rRNA. Requires Zn(2+) as cofactor.

Its subcellular location is the cytoplasm. Functionally, one of several proteins that assist in the late maturation steps of the functional core of the 30S ribosomal subunit. Helps release RbfA from mature subunits. May play a role in the assembly of ribosomal proteins into the subunit. Circularly permuted GTPase that catalyzes slow GTP hydrolysis, GTPase activity is stimulated by the 30S ribosomal subunit. The polypeptide is Small ribosomal subunit biogenesis GTPase RsgA (Clostridium botulinum (strain Loch Maree / Type A3)).